The primary structure comprises 552 residues: uncharacterized protein (552 aa).

The DhaL domain maps to 8 to 200 (KLFADMIIQG…LLCVYEGFLK (193 aa)).

This is an uncharacterized protein from Staphylococcus epidermidis (strain ATCC 12228 / FDA PCI 1200).